The following is a 128-amino-acid chain: Glycine cleavage system H protein (128 aa).

Residues 24–106 form the Lipoyl-binding domain; sequence VATVGITAFA…YNNGWLLKIK (83 aa). N6-lipoyllysine is present on K65.

Belongs to the GcvH family. In terms of assembly, the glycine cleavage system is composed of four proteins: P, T, L and H. Requires (R)-lipoate as cofactor.

Its function is as follows. The glycine cleavage system catalyzes the degradation of glycine. The H protein shuttles the methylamine group of glycine from the P protein to the T protein. This is Glycine cleavage system H protein from Acaryochloris marina (strain MBIC 11017).